Here is a 381-residue protein sequence, read N- to C-terminus: MTETQSLELAKELISRPSVTPDDRDCQKLLAERLHKIGFAAEELHFGDTKNIWLRRGTKAPVVCFAGHTDVVPTGPVEKWDSPPFEPAERDGRLYGRGAADMKTSIACFVTACERFVAEHPDHQGSIALLITSDEEGDALDGTTKVVDVLKARDELIDYCIVGEPTAVDKLGDMIKNGRRGSLSGNLTVKGKQGHIAYPHLAINPVHTFAPALLELTQEVWDEGNEYFPPTSFQISNINGGTGATNVIPGELNVKFNFRFSTESTEAGLKQRVHAILDKHGVQYDLQWSCSGQPFLTQAGKLTDVARAAIAETCGIEAELSTTGGTSDGRFIKAIAKELIELGPSNATIHQINENVRLDDIPKLSAVYEGILARLLAGNAV.

Residue histidine 68 participates in Zn(2+) binding. Aspartate 70 is an active-site residue. Aspartate 101 serves as a coordination point for Zn(2+). The active-site Proton acceptor is the glutamate 135. Residues glutamate 136, glutamate 164, and histidine 350 each coordinate Zn(2+).

Belongs to the peptidase M20A family. DapE subfamily. As to quaternary structure, homodimer. Zn(2+) serves as cofactor. Requires Co(2+) as cofactor.

The catalysed reaction is N-succinyl-(2S,6S)-2,6-diaminopimelate + H2O = (2S,6S)-2,6-diaminopimelate + succinate. It participates in amino-acid biosynthesis; L-lysine biosynthesis via DAP pathway; LL-2,6-diaminopimelate from (S)-tetrahydrodipicolinate (succinylase route): step 3/3. Catalyzes the hydrolysis of N-succinyl-L,L-diaminopimelic acid (SDAP), forming succinate and LL-2,6-diaminopimelate (DAP), an intermediate involved in the bacterial biosynthesis of lysine and meso-diaminopimelic acid, an essential component of bacterial cell walls. In Neisseria meningitidis serogroup C / serotype 2a (strain ATCC 700532 / DSM 15464 / FAM18), this protein is Succinyl-diaminopimelate desuccinylase.